Reading from the N-terminus, the 297-residue chain is B-lymphocyte antigen CD20 (297 aa).

Residues 1 to 56 (MTTPRNSVNGTFPAEPMKGPIAMQSGPKPLFRRMSSLVGPTQSFFMRESKTLGAVQ) are Cytoplasmic-facing. A Phosphoserine modification is found at S36. The helical transmembrane segment at 57 to 78 (IMNGLFHIALGGLLMIPAGIYA) threads the bilayer. The interval 74–80 (AGIYAPI) is epitope 1. Topologically, residues 79–84 (PICVTV) are extracellular. Residues 85–105 (WYPLWGGIMYIISGSLLAATE) form a helical membrane-spanning segment. At 106–120 (KNSRKCLVKGKMIMN) the chain is on the cytoplasmic side. C111 carries the S-palmitoyl cysteine lipid modification. The helical transmembrane segment at 121 to 141 (SLSLFAAISGMILSIMDILNI) threads the bilayer. The Extracellular segment spans residues 142–188 (KISHFLKMESLNFIRAHTPYINIYNCEPANPSEKNSPSTQYCYSIQS). The tract at residues 146–160 (FLKMESLNFIRAHTP) is epitope 2. C167 and C183 are disulfide-bonded. The interval 168–175 (EPANPSEK) is epitope 3 (recognized by antibodies, including Rituximab). A helical membrane pass occupies residues 189–209 (LFLGILSVMLIFAFFQELVIA). The Cytoplasmic segment spans residues 210–297 (GIVENEWKRT…SSPIENDSSP (88 aa)). C220 is lipidated: S-palmitoyl cysteine. S225 bears the Phosphoserine mark. Position 239 is a phosphothreonine (T239). Residues 247–297 (VGLTETSSQPKNEEDIEIIPIQEEEEEETETNFPEPPQDQESSPIENDSSP) are disordered. Over residues 260-276 (EDIEIIPIQEEEEEETE) the composition is skewed to acidic residues. Residues 285–297 (DQESSPIENDSSP) are compositionally biased toward polar residues.

The protein belongs to the MS4A family. As to quaternary structure, forms homotetramers. Interacts with the heavy and light chains of cell surface IgM, the antigen-binding components of the BCR. In terms of processing, phosphorylated on serines and threonines in resting B-cells. Protein kinase C/PKC can use CD20 as substrate. In terms of tissue distribution, expressed on B-cells.

Its subcellular location is the cell membrane. Functionally, B-lymphocyte-specific membrane protein that plays a role in the regulation of cellular calcium influx necessary for the development, differentiation, and activation of B-lymphocytes. Functions as a store-operated calcium (SOC) channel component promoting calcium influx after activation by the B-cell receptor/BCR. In Homo sapiens (Human), this protein is B-lymphocyte antigen CD20 (MS4A1).